The following is a 188-amino-acid chain: Nicotinamide-nucleotide adenylyltransferase (188 aa).

It belongs to the archaeal NMN adenylyltransferase family.

Its subcellular location is the cytoplasm. It catalyses the reaction beta-nicotinamide D-ribonucleotide + ATP + H(+) = diphosphate + NAD(+). Its pathway is cofactor biosynthesis; NAD(+) biosynthesis; NAD(+) from nicotinamide D-ribonucleotide: step 1/1. In Thermococcus kodakarensis (strain ATCC BAA-918 / JCM 12380 / KOD1) (Pyrococcus kodakaraensis (strain KOD1)), this protein is Nicotinamide-nucleotide adenylyltransferase.